The chain runs to 497 residues: Homeotic protein empty spiracles (497 aa).

Disordered stretches follow at residues 34 to 117 (NDVS…HLSP), 161 to 262 (SPLQ…MMMP), and 441 to 497 (NRRT…DASH). The segment covering 35–50 (DVSTAGGNSTPDLSGP) has biased composition (polar residues). Positions 51-68 (QSPPPGERNVPGSPPQTP) are enriched in pro residues. Residues 96-117 (PHAQQQQQQHLQAPHPHPHLSP) show a composition bias toward low complexity. Positions 161–176 (SPLQTRLSPETEQPQM) are enriched in polar residues. 2 stretches are compositionally biased toward low complexity: residues 208 to 239 (PKSV…QQQQ) and 248 to 262 (PAMM…MMMP). Residues 391–450 (PKRIRTAFSPSQLLKLEHAFESNQYVVGAERKALAQNLNLSETQVKVWFQNRRTKHKRMQ) constitute a DNA-binding region (homeobox). Residues 470–497 (GDEDDDELIDMEMDECPSDEEHELDASH) show a composition bias toward acidic residues.

It belongs to the EMX homeobox family.

It is found in the nucleus. Acts as a homeotic selector gene controlling antennal and mandibular segment identity. This Drosophila melanogaster (Fruit fly) protein is Homeotic protein empty spiracles (ems).